The primary structure comprises 102 residues: Beta-defensin 116 (102 aa).

The signal sequence occupies residues 1–23 (MSVMKPCLMTIAILMILAQKTPG). Cystine bridges form between C40-C67, C47-C61, and C51-C68. Residues 83–102 (EDYDSNSNLSVTNSSSYSHI) are disordered. A compositionally biased stretch (low complexity) spans 87–102 (SNSNLSVTNSSSYSHI).

Belongs to the beta-defensin family.

Its subcellular location is the secreted. In terms of biological role, has antibacterial activity. This chain is Beta-defensin 116 (DEFB116), found in Homo sapiens (Human).